Here is a 404-residue protein sequence, read N- to C-terminus: Argininosuccinate synthase (404 aa).

ATP contacts are provided by residues 10-18 and Ala38; that span reads AYSGGVDTS. Tyr89 contributes to the L-citrulline binding site. Residue Gly119 participates in ATP binding. 3 residues coordinate L-aspartate: Thr121, Asn125, and Asp126. Asn125 serves as a coordination point for L-citrulline. 5 residues coordinate L-citrulline: Arg129, Ser177, Ser186, Glu262, and Tyr274.

The protein belongs to the argininosuccinate synthase family. Type 1 subfamily. Homotetramer.

The protein resides in the cytoplasm. The catalysed reaction is L-citrulline + L-aspartate + ATP = 2-(N(omega)-L-arginino)succinate + AMP + diphosphate + H(+). It functions in the pathway amino-acid biosynthesis; L-arginine biosynthesis; L-arginine from L-ornithine and carbamoyl phosphate: step 2/3. This chain is Argininosuccinate synthase, found in Prochlorococcus marinus (strain MIT 9515).